A 375-amino-acid chain; its full sequence is Fasciculation and elongation protein zeta-2 (375 aa).

The interval 1-42 (MAADGDWQDFYEFQEPAGSVRDQENCNASPEAGAGAHAGGDS) is disordered. Ser130, Ser171, and Ser190 each carry phosphoserine. Residues 156 to 177 (TADQVIEEIEEMMQESPDLEDD) adopt a coiled-coil conformation. Residues 206 to 281 (ERVKRLSVSE…AKKKKKLKNG (76 aa)) are a coiled coil. The interval 265–297 (QKEHKETAKKKKKLKNGSSQNGRNERSHMPGTR) is disordered.

This sequence belongs to the zygin family. In terms of assembly, homodimer; disulfide-linked. May form heterodimers with FEZ1. Interacts with synaptotagmin.

Functionally, involved in axonal outgrowth and fasciculation. The sequence is that of Fasciculation and elongation protein zeta-2 (Fez2) from Rattus norvegicus (Rat).